Reading from the N-terminus, the 294-residue chain is Putative HTH-type transcriptional regulatory protein STK_12680 (294 aa).

Residues Leu123 to Leu175 enclose the HTH cro/C1-type domain. Residues Leu134–Arg153 constitute a DNA-binding region (H-T-H motif).

The polypeptide is Putative HTH-type transcriptional regulatory protein STK_12680 (Sulfurisphaera tokodaii (strain DSM 16993 / JCM 10545 / NBRC 100140 / 7) (Sulfolobus tokodaii)).